A 144-amino-acid polypeptide reads, in one-letter code: MESPLGSDLARLVRIWRALIDHRLKPLELTQTHWVTLHNIHQLPPDQSQIQLAKAIGIEQPSLVRTLDQLEEKGLISRQTCASDRRAKRIKLTEKAEPLISEMEAVINKTRAEILHGISAEELEQLITLIAKLEHNIIELQAKG.

One can recognise an HTH marR-type domain in the interval 2–135 (ESPLGSDLAR…LITLIAKLEH (134 aa)). The segment at residues 49–72 (QIQLAKAIGIEQPSLVRTLDQLEE) is a DNA-binding region (H-T-H motif).

Belongs to the SlyA family. Homodimer.

Functionally, transcription regulator that can specifically activate or repress expression of target genes. This Escherichia coli (strain 55989 / EAEC) protein is Transcriptional regulator SlyA.